The sequence spans 434 residues: Serine hydroxymethyltransferase (434 aa).

(6S)-5,6,7,8-tetrahydrofolate is bound by residues L133 and 137 to 139 (GHL). At K242 the chain carries N6-(pyridoxal phosphate)lysine. A (6S)-5,6,7,8-tetrahydrofolate-binding site is contributed by 366 to 368 (SPF).

It belongs to the SHMT family. As to quaternary structure, homodimer. It depends on pyridoxal 5'-phosphate as a cofactor.

The protein localises to the cytoplasm. It catalyses the reaction (6R)-5,10-methylene-5,6,7,8-tetrahydrofolate + glycine + H2O = (6S)-5,6,7,8-tetrahydrofolate + L-serine. It functions in the pathway one-carbon metabolism; tetrahydrofolate interconversion. It participates in amino-acid biosynthesis; glycine biosynthesis; glycine from L-serine: step 1/1. In terms of biological role, catalyzes the reversible interconversion of serine and glycine with tetrahydrofolate (THF) serving as the one-carbon carrier. This reaction serves as the major source of one-carbon groups required for the biosynthesis of purines, thymidylate, methionine, and other important biomolecules. Also exhibits THF-independent aldolase activity toward beta-hydroxyamino acids, producing glycine and aldehydes, via a retro-aldol mechanism. This is Serine hydroxymethyltransferase from Erythrobacter litoralis (strain HTCC2594).